The chain runs to 1143 residues: MPPPRTREGRDRRDHHRAPSEEEALEKWDWNCPETRRLLEDAFFREEDYIRQGSEECQKFWTFFERLQRFQNLKTSRKEEKDPGQPKHSIPALADLPRTYDPRYRINLSVLGPATRGSQGLGRHLPAERVAEFRRALLHYLDFGQKQAFGRLAKLQRERAALPIAQYGNRILQTLKEHQVVVVAGDTGCGKSTQVPQYLLAAGFSHVACTQPRRIACISLAKRVGFESLSQYGSQVGYQIRFESTRSAATKIVFLTVGLLLRQIQREPSLPQYEVLIVDEVHERHLHNDFLLGVLQRLLPTRPDLKVILMSATINISLFSSYFSNAPVVQVPGRLFPITVVYQPQEAEPTTSKSEKLDPRPFLRVLESIDHKYPPEERGDLLVFLSGMAEISAVLEAAQTYASHTQRWVVLPLHSALSVADQDKVFDVAPPGVRKCILSTNIAETSVTIDGIRFVVDSGKVKEMSYDPQAKLQRLQEFWISQASAEQRKGRAGRTGPGVCFRLYAESDYDAFAPYPVPEIRRVALDSLVLQMKSMSVGDPRTFPFIEPPPPASLETAILYLRDQGALDSSEALTPIGSLLAQLPVDVVIGKMLILGSMFSLVEPVLTIAAALSVQSPFTRSAQSSPECAAARRPLESDQGDPFTLFNVFNAWVQVKSERSRNSRKWCRRRGIEEHRLYEMANLRRQFKELLEDHGLLAGAQAAQVGDSYSRLQQRRERRALHQLKRQHEEGAGRRRKVLRLQEEQDGGSSDEDRAGPAPPGASDGVDIQDVKFKLRHDLAQLQAAASSAQDLSREQLALLKLVLGRGLYPQLAVPDAFNSSRKDSDQIFHTQAKQGAVLHPTCVFAGSPEVLHAQELEASNCDGSRDDKDKMSSKHQLLSFVSLLETNKPYLVNCVRIPALQSLLLFSRSLDTNGDCSRLVADGWLELQLADSESAIRLLAASLRLRARWESALDRQLAHQAQQQLEEEEEDTPVSPKEVATLSKELLQFTASKIPYSLRRLTGLEVQNMYVGPQTIPATPHLPGLFGSSTLSPHPTKGGYAVTDFLTYNCLTNDTDLYSDCLRTFWTCPHCGLHAPLTPLERIAHENTCPQAPQDGPPGAEEAALETLQKTSVLQRPYHCEACGKDFLFTPTEVLRHRKQHV.

Disordered regions lie at residues 1 to 24 (MPPP…EEEA) and 75 to 94 (TSRK…PALA). A compositionally biased stretch (basic and acidic residues) spans 76 to 85 (SRKEEKDPGQ). The Helicase ATP-binding domain occupies 172-332 (LQTLKEHQVV…FSNAPVVQVP (161 aa)). ATP is bound at residue 185–192 (GDTGCGKS). Residues 279-282 (DEVH) carry the DEAH box motif. The region spanning 368–536 (SIDHKYPPEE…SLVLQMKSMS (169 aa)) is the Helicase C-terminal domain. Residues 701–955 (QAAQVGDSYS…LRARWESALD (255 aa)) are negatively regulates interaction with UPF1. Residues 724–766 (LKRQHEEGAGRRRKVLRLQEEQDGGSSDEDRAGPAPPGASDGV) are disordered. 2 positions are modified to phosphoserine: serine 749 and serine 750. Residues 810 to 1143 (PQLAVPDAFN…EVLRHRKQHV (334 aa)) form a required for phosphorylation of UPF1. Not required for interaction with UPF1 region. Residues 957–1143 (QLAHQAQQQL…EVLRHRKQHV (187 aa)) are required for the interaction with SMG1 and subsequent phosphorylation of UPF1.

Belongs to the DEAD box helicase family. DEAH subfamily. Forms a complex with RUVBL1 and RUVBL2. Part of a complex composed of SMG1, DHX34 and UPF1; within the complex DHX34 acts as a scaffolding protein to facilitate SMG1 phosphorylation of UPF1. Interacts with UPF1, MOV10, EIF4A3, XRN2, SMG6, SMG7, SMG9, UPF3A, UPF3B, CASC3/MLN51, XRN1, DIS3 and DCP1A; the interactions are RNA-independent. Interacts with NCBP1/CPB80; the interaction is RNA-dependent. Interacts (via C-terminus) with SMG1; the interaction is RNA-independent. As to expression, expressed in whole blood, testis and spleen. Also expressed in the brain.

It carries out the reaction ATP + H2O = ADP + phosphate + H(+). Functionally, probable ATP-binding RNA helicase required for nonsense-mediated decay (NMD) degradation of mRNA transcripts containing premature stop codons. Promotes the phosphorylation of UPF1 along with its interaction with key NMD pathway proteins UPF2 and EIF4A3. Interaction with the RUVBL1-RUVBL2 complex results in loss of nucleotide binding ability and ATP hydrolysis of the complex. Negatively regulates the nucleotide binding ability and ATP hydrolysis of the RUVBL1-RUVBL2 complex via induction of N-terminus conformation changes of the RUVBL2 subunits. The sequence is that of Probable ATP-dependent RNA helicase DHX34 from Homo sapiens (Human).